The sequence spans 465 residues: Cysteine--tRNA ligase (465 aa).

Cysteine 29 lines the Zn(2+) pocket. Residues 31 to 41 carry the 'HIGH' region motif; the sequence is ITPYDEVHLGH. Residues cysteine 212, histidine 237, and glutamate 241 each coordinate Zn(2+). A 'KMSKS' region motif is present at residues 269–273; that stretch reads KMSKS. Lysine 272 is an ATP binding site.

This sequence belongs to the class-I aminoacyl-tRNA synthetase family. As to quaternary structure, monomer. Zn(2+) serves as cofactor.

It localises to the cytoplasm. It carries out the reaction tRNA(Cys) + L-cysteine + ATP = L-cysteinyl-tRNA(Cys) + AMP + diphosphate. The polypeptide is Cysteine--tRNA ligase (Endomicrobium trichonymphae).